The sequence spans 350 residues: Dihydroorotase (350 aa).

Residues H17 and H19 each coordinate Zn(2+). Substrate is bound by residues H19–R21 and N45. Residues K103, H140, and H178 each contribute to the Zn(2+) site. K103 carries the post-translational modification N6-carboxylysine. H140 is a binding site for substrate. L224 contributes to the substrate binding site. D252 serves as a coordination point for Zn(2+). D252 is a catalytic residue. The substrate site is built by H256 and A268.

This sequence belongs to the metallo-dependent hydrolases superfamily. DHOase family. Class II DHOase subfamily. Homodimer. Zn(2+) serves as cofactor.

It carries out the reaction (S)-dihydroorotate + H2O = N-carbamoyl-L-aspartate + H(+). It functions in the pathway pyrimidine metabolism; UMP biosynthesis via de novo pathway; (S)-dihydroorotate from bicarbonate: step 3/3. Catalyzes the reversible cyclization of carbamoyl aspartate to dihydroorotate. In Buchnera aphidicola subsp. Acyrthosiphon pisum (strain APS) (Acyrthosiphon pisum symbiotic bacterium), this protein is Dihydroorotase.